A 185-amino-acid polypeptide reads, in one-letter code: Bcl-2-modifying factor (185 aa).

The interval 1–28 (MEPPQCVEELEDDVFQPEDGEPGTQPGS) is disordered. Residues 8-21 (EELEDDVFQPEDGE) are compositionally biased toward acidic residues. The interaction with DLC2 stretch occupies residues 67 to 75 (DKATQTLSP). Residues 134 to 148 (IARKLQCIADQFHRL) carry the BH3 motif.

The protein belongs to the Bcl-2 family. Interacts with MCL1, BCL2, BCL2L1/BCL-Xl, BCL2A1 and BCL2L2/BCL-w. Interacts with the myosin V actin motor complex through its binding to DLC2.

In terms of biological role, may play a role in apoptosis. The chain is Bcl-2-modifying factor (Bmf) from Rattus norvegicus (Rat).